A 430-amino-acid chain; its full sequence is Adenylosuccinate synthetase (430 aa).

Residues 12 to 18 (GDEGKGK) and 40 to 42 (GHT) each bind GTP. Asp13 functions as the Proton acceptor in the catalytic mechanism. Mg(2+) contacts are provided by Asp13 and Gly40. Residues 13 to 16 (DEGK), 38 to 41 (NAGH), Thr129, Arg143, Gln224, Thr239, and Arg303 contribute to the IMP site. The Proton donor role is filled by His41. 299–305 (TVSNRKR) lines the substrate pocket. GTP is bound by residues Arg305, 331–333 (KLD), and 413–415 (STG).

It belongs to the adenylosuccinate synthetase family. As to quaternary structure, homodimer. The cofactor is Mg(2+).

Its subcellular location is the cytoplasm. It carries out the reaction IMP + L-aspartate + GTP = N(6)-(1,2-dicarboxyethyl)-AMP + GDP + phosphate + 2 H(+). It participates in purine metabolism; AMP biosynthesis via de novo pathway; AMP from IMP: step 1/2. Plays an important role in the de novo pathway of purine nucleotide biosynthesis. Catalyzes the first committed step in the biosynthesis of AMP from IMP. The polypeptide is Adenylosuccinate synthetase (Ehrlichia chaffeensis (strain ATCC CRL-10679 / Arkansas)).